The sequence spans 450 residues: Keratin, type I cytoskeletal 25 (450 aa).

Residues 1–25 form a disordered region; the sequence is MSLRLPSGSRRASPRPTTGSLRLSS. The tract at residues 1 to 78 is head; the sequence is MSLRLPSGSR…VNEGGLLSGN (78 aa). Positions 79 to 114 are coil 1A; the sequence is EKVTMQNLNDRLASYLENVRALEEANADLEQKIKGW. The 316-residue stretch at 79–394 folds into the IF rod domain; it reads EKVTMQNLND…LLIGGDDGAC (316 aa). A linker 1 region spans residues 115–136; that stretch reads YEKFGPGSCRGLDHDYSRYFPI. Residues 137–228 form a coil 1B region; that stretch reads IEDLKNQIIA…KNHKEEMQVL (92 aa). A linker 12 region spans residues 229-251; the sequence is QCAAGGNVNVEMNAAPGVDLTVL. A coil 2 region spans residues 252 to 390; that stretch reads LNNMRAEYEA…ETYCLLIGGD (139 aa). The tract at residues 391 to 450 is tail; it reads DGACKSGGYKSKDYGAGNVGNQMKDPVKAIVVKKVLEEVDQRSKILTPRLHSLEEKSQSN. Ser442 carries the phosphoserine modification.

Belongs to the intermediate filament family. As to quaternary structure, heterodimer of a type I and a type II keratin. Heterodimer with type II keratin KRT5 leading to the formation of keratin intermediate filament (KIF) network. Interacts with KRT6A to form filaments.

The protein resides in the cytoplasm. Functionally, essential for the proper assembly of type I and type II keratin protein complexes and formation of keratin intermediate filaments in the inner root sheath (irs). Plays a role in the cytoskeleton organization. The protein is Keratin, type I cytoskeletal 25 of Bos taurus (Bovine).